A 1129-amino-acid polypeptide reads, in one-letter code: Translation initiation factor IF-2 (1129 aa).

Composition is skewed to low complexity over residues 33–42 (AARSHSSSIS) and 56–99 (GGSP…AAKP). Disordered stretches follow at residues 33–462 (AARS…IGEN) and 485–515 (SLAR…ETAR). Residues 100 to 112 (SPKPSAPSRPEAP) show a composition bias toward pro residues. The segment covering 135-147 (STPAAAAPAAAPS) has biased composition (low complexity). Over residues 148–161 (APAPSAPTPRPKPT) the composition is skewed to pro residues. The segment covering 162 to 175 (APKASAPAPTASAP) has biased composition (low complexity). Composition is skewed to pro residues over residues 176–191 (SAPP…PAPA) and 211–221 (PTAPPTRPQPK). Residues 257-273 (GQRPGVSPRPSGPPGQR) show a composition bias toward low complexity. Residues 431–445 (GRPDWDDSAKLEALR) are compositionally biased toward basic and acidic residues. Basic residues-rich tracts occupy residues 490-499 (SKPRTKHKPA) and 506-515 (IRKRRKETAR). One can recognise a tr-type G domain in the interval 621 to 793 (RRPPVVTVMG…ILLVTEVEDL (173 aa)). Positions 630-637 (GHVDHGKT) are G1. Residue 630-637 (GHVDHGKT) coordinates GTP. Residues 655–659 (GITQH) form a G2 region. The G3 stretch occupies residues 680–683 (DTPG). Residues 680–684 (DTPGH) and 734–737 (NKID) each bind GTP. Residues 734-737 (NKID) form a G4 region. The G5 stretch occupies residues 770–772 (SAL).

This sequence belongs to the TRAFAC class translation factor GTPase superfamily. Classic translation factor GTPase family. IF-2 subfamily.

The protein resides in the cytoplasm. Its function is as follows. One of the essential components for the initiation of protein synthesis. Protects formylmethionyl-tRNA from spontaneous hydrolysis and promotes its binding to the 30S ribosomal subunits. Also involved in the hydrolysis of GTP during the formation of the 70S ribosomal complex. The chain is Translation initiation factor IF-2 from Synechococcus sp. (strain CC9311).